We begin with the raw amino-acid sequence, 105 residues long: Small ribosomal subunit protein eS10B (105 aa).

Belongs to the eukaryotic ribosomal protein eS10 family. As to quaternary structure, component of the small ribosomal subunit (SSU). Mature yeast ribosomes consist of a small (40S) and a large (60S) subunit. The 40S small subunit contains 1 molecule of ribosomal RNA (18S rRNA) and 33 different proteins (encoded by 57 genes). The large 60S subunit contains 3 rRNA molecules (25S, 5.8S and 5S rRNA) and 46 different proteins (encoded by 81 genes). eS10 interacts with GCN1 (via middle region); this interaction is direct and promotes GCN2 kinase activity. In terms of processing, the N-terminus is not modified.

It is found in the cytoplasm. Functionally, component of the ribosome, a large ribonucleoprotein complex responsible for the synthesis of proteins in the cell. The small ribosomal subunit (SSU) binds messenger RNAs (mRNAs) and translates the encoded message by selecting cognate aminoacyl-transfer RNA (tRNA) molecules. The large subunit (LSU) contains the ribosomal catalytic site termed the peptidyl transferase center (PTC), which catalyzes the formation of peptide bonds, thereby polymerizing the amino acids delivered by tRNAs into a polypeptide chain. The nascent polypeptides leave the ribosome through a tunnel in the LSU and interact with protein factors that function in enzymatic processing, targeting, and the membrane insertion of nascent chains at the exit of the ribosomal tunnel. eS10 plays a role as a positive regulator of the GCN2 kinase activity by stimulating GCN1-mediated GCN2 activation. The polypeptide is Small ribosomal subunit protein eS10B (Saccharomyces cerevisiae (strain ATCC 204508 / S288c) (Baker's yeast)).